A 153-amino-acid chain; its full sequence is Bud site selection protein 25 (153 aa).

Its function is as follows. Involved in bud site selection. Required for resistance to the DNA-damaging agent methyl methanesulfonate (MMS). The sequence is that of Bud site selection protein 25 from Saccharomyces cerevisiae (strain ATCC 204508 / S288c) (Baker's yeast).